A 31-amino-acid chain; its full sequence is Scolopendra 20566.01 Da toxin (31 aa).

This sequence belongs to the CRISP family. Venom allergen 5-like subfamily. Contains 3 disulfide bonds. Expressed by the venom gland.

It is found in the secreted. The sequence is that of Scolopendra 20566.01 Da toxin from Scolopendra angulata (Barbados giant red centipede).